Reading from the N-terminus, the 122-residue chain is Large ribosomal subunit protein uL14 (122 aa).

The protein belongs to the universal ribosomal protein uL14 family. In terms of assembly, part of the 50S ribosomal subunit. Forms a cluster with proteins L3 and L19. In the 70S ribosome, L14 and L19 interact and together make contacts with the 16S rRNA in bridges B5 and B8.

In terms of biological role, binds to 23S rRNA. Forms part of two intersubunit bridges in the 70S ribosome. This Exiguobacterium sibiricum (strain DSM 17290 / CCUG 55495 / CIP 109462 / JCM 13490 / 255-15) protein is Large ribosomal subunit protein uL14.